The chain runs to 271 residues: Ribosomal RNA small subunit methyltransferase A (271 aa).

6 residues coordinate S-adenosyl-L-methionine: H18, L20, G45, E66, D91, and N113.

Belongs to the class I-like SAM-binding methyltransferase superfamily. rRNA adenine N(6)-methyltransferase family. RsmA subfamily.

It is found in the cytoplasm. The catalysed reaction is adenosine(1518)/adenosine(1519) in 16S rRNA + 4 S-adenosyl-L-methionine = N(6)-dimethyladenosine(1518)/N(6)-dimethyladenosine(1519) in 16S rRNA + 4 S-adenosyl-L-homocysteine + 4 H(+). Its function is as follows. Specifically dimethylates two adjacent adenosines (A1518 and A1519) in the loop of a conserved hairpin near the 3'-end of 16S rRNA in the 30S particle. May play a critical role in biogenesis of 30S subunits. In Baumannia cicadellinicola subsp. Homalodisca coagulata, this protein is Ribosomal RNA small subunit methyltransferase A.